The following is a 79-amino-acid chain: Small ribosomal subunit protein uS17 (79 aa).

The protein belongs to the universal ribosomal protein uS17 family. Part of the 30S ribosomal subunit.

In terms of biological role, one of the primary rRNA binding proteins, it binds specifically to the 5'-end of 16S ribosomal RNA. The polypeptide is Small ribosomal subunit protein uS17 (Rhizobium rhizogenes (strain K84 / ATCC BAA-868) (Agrobacterium radiobacter)).